The chain runs to 132 residues: MSINDPIGDLITRIRNAQMRRKDKTSTPGSRLRASLLDVLRDEGYIRGYTTTDHGNGRTEFEIELKYFDGQPVIREITRVSKPGRRVYASVKALPRVANGLGIAVLSTPQGVMADHDARDKNVGGEVLCTVF.

It belongs to the universal ribosomal protein uS8 family. As to quaternary structure, part of the 30S ribosomal subunit. Contacts proteins S5 and S12.

Its function is as follows. One of the primary rRNA binding proteins, it binds directly to 16S rRNA central domain where it helps coordinate assembly of the platform of the 30S subunit. The protein is Small ribosomal subunit protein uS8 of Azorhizobium caulinodans (strain ATCC 43989 / DSM 5975 / JCM 20966 / LMG 6465 / NBRC 14845 / NCIMB 13405 / ORS 571).